Here is a 91-residue protein sequence, read N- to C-terminus: Acyl carrier protein (91 aa).

The Carrier domain occupies 4–79; the sequence is QQILDKVQSI…QAVDYILQHK (76 aa). S39 is subject to O-(pantetheine 4'-phosphoryl)serine.

This sequence belongs to the acyl carrier protein (ACP) family. In terms of processing, 4'-phosphopantetheine is transferred from CoA to a specific serine of apo-ACP by AcpS. This modification is essential for activity because fatty acids are bound in thioester linkage to the sulfhydryl of the prosthetic group.

The protein resides in the plastid. It localises to the chloroplast. It functions in the pathway lipid metabolism; fatty acid biosynthesis. In terms of biological role, carrier of the growing fatty acid chain in fatty acid biosynthesis. The protein is Acyl carrier protein of Cyanidioschyzon merolae (strain NIES-3377 / 10D) (Unicellular red alga).